Here is a 299-residue protein sequence, read N- to C-terminus: GTPase Era (299 aa).

An Era-type G domain is found at 5 to 172 (KSGFVSIIGR…IDVLKSFLPE (168 aa)). The G1 stretch occupies residues 13–20 (GRPNVGKS). Position 13–20 (13–20 (GRPNVGKS)) interacts with GTP. Residues 39-43 (QTTRN) form a G2 region. The segment at 60–63 (DTPG) is G3. GTP contacts are provided by residues 60 to 64 (DTPGI) and 122 to 125 (NKID). The interval 122 to 125 (NKID) is G4. The tract at residues 151-153 (ISA) is G5. Residues 203-280 (TSEEIPHAIG…YLELWVKVQR (78 aa)) enclose the KH type-2 domain.

Belongs to the TRAFAC class TrmE-Era-EngA-EngB-Septin-like GTPase superfamily. Era GTPase family. Monomer.

Its subcellular location is the cytoplasm. It is found in the cell membrane. An essential GTPase that binds both GDP and GTP, with rapid nucleotide exchange. Plays a role in 16S rRNA processing and 30S ribosomal subunit biogenesis and possibly also in cell cycle regulation and energy metabolism. The chain is GTPase Era from Staphylococcus epidermidis (strain ATCC 35984 / DSM 28319 / BCRC 17069 / CCUG 31568 / BM 3577 / RP62A).